Here is a 327-residue protein sequence, read N- to C-terminus: Glycerol-3-phosphate dehydrogenase [NAD(P)+] (327 aa).

Phenylalanine 13, arginine 34, and lysine 107 together coordinate NADPH. Sn-glycerol 3-phosphate is bound by residues lysine 107 and glycine 135. Alanine 139 serves as a coordination point for NADPH. Lysine 190, aspartate 243, serine 253, arginine 254, and asparagine 255 together coordinate sn-glycerol 3-phosphate. The active-site Proton acceptor is the lysine 190. Arginine 254 lines the NADPH pocket. 2 residues coordinate NADPH: valine 276 and glutamate 277.

It belongs to the NAD-dependent glycerol-3-phosphate dehydrogenase family.

The protein resides in the cytoplasm. It carries out the reaction sn-glycerol 3-phosphate + NAD(+) = dihydroxyacetone phosphate + NADH + H(+). The enzyme catalyses sn-glycerol 3-phosphate + NADP(+) = dihydroxyacetone phosphate + NADPH + H(+). The protein operates within membrane lipid metabolism; glycerophospholipid metabolism. Catalyzes the reduction of the glycolytic intermediate dihydroxyacetone phosphate (DHAP) to sn-glycerol 3-phosphate (G3P), the key precursor for phospholipid synthesis. The sequence is that of Glycerol-3-phosphate dehydrogenase [NAD(P)+] from Rhizobium etli (strain ATCC 51251 / DSM 11541 / JCM 21823 / NBRC 15573 / CFN 42).